We begin with the raw amino-acid sequence, 440 residues long: Golgi reassembly-stacking protein 1 (440 aa).

Glycine 2 carries N-myristoyl glycine lipidation. PDZ GRASP-type domains follow at residues 15–105 (EGFH…FCSF) and 111–199 (QVWH…YGYL). The tract at residues 15-215 (EGFHLHGVQE…PPSYHKKPPG (201 aa)) is GRASP. Zn(2+) contacts are provided by histidine 18, histidine 20, and cysteine 103. Residues 190–202 (LGCGIGYGYLHRI) are essential for interaction with GOLGA2/GM130. 3 disordered regions span residues 205–248 (QPPS…ETGS), 261–301 (PGSS…PVQR), and 327–440 (LPSS…STTE). A compositionally biased stretch (pro residues) spans 214–239 (PGTPPPSALPLGAPPPDALPPGPTPE). A Phosphothreonine modification is found at threonine 216. The span at 327–336 (LPSSTELTTT) shows a compositional bias: low complexity. Polar residues predominate over residues 337 to 351 (AVSTSGPEDICSSSS). Phosphoserine occurs at positions 362, 364, and 373.

It belongs to the GORASP family. In terms of assembly, homodimer. Forms higher-order oligomers under interphase but not mitotic conditions. Dimers of the protein on one membrane might be able to interact with dimers on another and so stack cisternae. Interacts with the C-terminus of GOLGA2/GM130 under both mitotic and non-mitotic conditions. The interaction is critical for the correct targeting of both proteins to the cis-Golgi. Interacts with TMED2 and TMED3. Post-translationally, phosphorylated by CDC2/B1 and PLK kinases during mitosis. Phosphorylation cycle correlates with the cisternal stacking cycle. Phosphorylation of the homodimer prevents the association of dimers into higher-order oligomers, leading to cisternal unstacking. Target for caspase-3 cleavage during apoptosis. The cleavage contributes to Golgi fragmentation and occurs very early in the execution phase of apoptosis. In terms of processing, myristoylated.

Its subcellular location is the golgi apparatus. It is found in the cis-Golgi network membrane. The protein localises to the endoplasmic reticulum-Golgi intermediate compartment membrane. In terms of biological role, key structural protein of the Golgi apparatus. The membrane cisternae of the Golgi apparatus adhere to each other to form stacks, which are aligned side by side to form the Golgi ribbon. Acting in concert with GORASP2/GRASP55, is required for the formation and maintenance of the Golgi ribbon, and may be dispensable for the formation of stacks. However, other studies suggest that GORASP1 plays an important role in assembly and membrane stacking of the cisternae, and in the reassembly of Golgi stacks after breakdown during mitosis. Caspase-mediated cleavage of GORASP1 is required for fragmentation of the Golgi during apoptosis. Also mediates, via its interaction with GOLGA2/GM130, the docking of transport vesicles with the Golgi membranes. Mediates ER stress-induced unconventional (ER/Golgi-independent) trafficking of core-glycosylated CFTR to cell membrane. This chain is Golgi reassembly-stacking protein 1 (GORASP1), found in Homo sapiens (Human).